Here is a 39-residue protein sequence, read N- to C-terminus: Photosystem II reaction center protein J (39 aa).

A helical transmembrane segment spans residues 7 to 27 (IPLWIVAVVVGLGVVTVVGLF).

Belongs to the PsbJ family. PSII is composed of 1 copy each of membrane proteins PsbA, PsbB, PsbC, PsbD, PsbE, PsbF, PsbH, PsbI, PsbJ, PsbK, PsbL, PsbM, PsbT, PsbX, PsbY, PsbZ, Psb30/Ycf12, peripheral proteins PsbO, CyanoQ (PsbQ), PsbU, PsbV and a large number of cofactors. It forms dimeric complexes.

The protein resides in the cellular thylakoid membrane. In terms of biological role, one of the components of the core complex of photosystem II (PSII). PSII is a light-driven water:plastoquinone oxidoreductase that uses light energy to abstract electrons from H(2)O, generating O(2) and a proton gradient subsequently used for ATP formation. It consists of a core antenna complex that captures photons, and an electron transfer chain that converts photonic excitation into a charge separation. This chain is Photosystem II reaction center protein J, found in Synechococcus sp. (strain JA-3-3Ab) (Cyanobacteria bacterium Yellowstone A-Prime).